The sequence spans 210 residues: Protein SYM1 (210 aa).

4 helical membrane-spanning segments follow: residues Ile-22 to Phe-39, Ala-68 to Tyr-84, Leu-112 to Leu-129, and Leu-173 to Tyr-189.

This sequence belongs to the peroxisomal membrane protein PXMP2/4 family.

It localises to the mitochondrion inner membrane. May be involved in cellular response to stress. Required to maintain mitochondrial DNA (mtDNA) integrity and stability. The sequence is that of Protein SYM1 (SYM1) from Candida glabrata (strain ATCC 2001 / BCRC 20586 / JCM 3761 / NBRC 0622 / NRRL Y-65 / CBS 138) (Yeast).